The primary structure comprises 544 residues: Chaperonin GroEL (544 aa).

ATP-binding positions include 29–32, 86–90, Gly-413, 476–478, and Asp-492; these read TLGP, DGTTT, and NAA.

Belongs to the chaperonin (HSP60) family. In terms of assembly, forms a cylinder of 14 subunits composed of two heptameric rings stacked back-to-back. Interacts with the co-chaperonin GroES.

Its subcellular location is the cytoplasm. The catalysed reaction is ATP + H2O + a folded polypeptide = ADP + phosphate + an unfolded polypeptide.. In terms of biological role, together with its co-chaperonin GroES, plays an essential role in assisting protein folding. The GroEL-GroES system forms a nano-cage that allows encapsulation of the non-native substrate proteins and provides a physical environment optimized to promote and accelerate protein folding. The polypeptide is Chaperonin GroEL (Bacillus cereus).